The primary structure comprises 564 residues: MNHDQAVLNRIWCETLFEELYRFGVRDVCVAPGSRSTPLALEANAHTRLKLHTHFDERGLGFLALGLAKASQRPVAVVVTSGTAVANLLPAVAEAGLTGEKLVLLTADRPIELVGCGANQAIAQQGIFSNHVCASLNLPSPNTQTSLNWLLTSVDQVLHQQAVSGHAVHINCPFPEPLYSNAPKSIYQSYIDTVDVWRAEGGIYSNKQMPLPMPPSLAEIEQRKGVVVIGSVTLQEAKQAHQFGAQMGWPVLCDPQSGTTSDWSGFDIWLQNPAARAQLSQCDLIIQFGRRLVSKRLHQWLEQQVQAGCDYWYVSPDFERDNQSHLPQQHFVCSIAAWLNVVTNREVQPVAWANELPRFSAEVNKQAREIAQSSLCEMMIALHLSSLVGSADLFLGNSLFVRMVDMVGQLHGVETFTNRGASGIDGLFATASGVQRARSNPMLLMIGDTSALYDLNSLALYSHQETPVVIVVTNNDGGAIFDLLPVPPQQKQALYQMPHGYRFEFAAKQFGLDYVCPTSMTELTERIVGHFAHGCGALLVEVNTPPNQASQHIKQLADHVRSLV.

This sequence belongs to the TPP enzyme family. MenD subfamily. In terms of assembly, homodimer. Mg(2+) is required as a cofactor. Mn(2+) serves as cofactor. The cofactor is thiamine diphosphate.

The catalysed reaction is isochorismate + 2-oxoglutarate + H(+) = 5-enolpyruvoyl-6-hydroxy-2-succinyl-cyclohex-3-ene-1-carboxylate + CO2. The protein operates within quinol/quinone metabolism; 1,4-dihydroxy-2-naphthoate biosynthesis; 1,4-dihydroxy-2-naphthoate from chorismate: step 2/7. It functions in the pathway quinol/quinone metabolism; menaquinone biosynthesis. Catalyzes the thiamine diphosphate-dependent decarboxylation of 2-oxoglutarate and the subsequent addition of the resulting succinic semialdehyde-thiamine pyrophosphate anion to isochorismate to yield 2-succinyl-5-enolpyruvyl-6-hydroxy-3-cyclohexene-1-carboxylate (SEPHCHC). The chain is 2-succinyl-5-enolpyruvyl-6-hydroxy-3-cyclohexene-1-carboxylate synthase from Vibrio vulnificus (strain CMCP6).